Reading from the N-terminus, the 876-residue chain is Leucine--tRNA ligase (876 aa).

A 'HIGH' region motif is present at residues 43 to 53; sequence PYPSGRIHMGH. Residues 632–636 carry the 'KMSKS' region motif; sequence KMSKS. K635 serves as a coordination point for ATP.

It belongs to the class-I aminoacyl-tRNA synthetase family.

It localises to the cytoplasm. The catalysed reaction is tRNA(Leu) + L-leucine + ATP = L-leucyl-tRNA(Leu) + AMP + diphosphate. The chain is Leucine--tRNA ligase from Rhizobium etli (strain ATCC 51251 / DSM 11541 / JCM 21823 / NBRC 15573 / CFN 42).